The chain runs to 1063 residues: E3 ubiquitin-protein ligase PDZRN3 (1063 aa).

An RING-type; degenerate zinc finger spans residues 18–56 (CALCHKVLEDPLTTPCGHVFCAGCVLPWVVQEGSCPARC). The TRAF-type zinc finger occupies 100 to 158 (EHLERCDFAPARCRHAGCGQLLLRRDVEAHMRDACDARPVGRCQEGCGLPLTHGEQRAG). PDZ domains lie at 249 to 339 (TLVL…LRRT) and 419 to 503 (EVGL…IARP). Ser-427 is modified (phosphoserine). Residues 545–602 (QKKHEEDGGTTDTATILSNQHEKDSGVGRTDESTRNDESSEQENNGEDATASANPLAG) are disordered. Residues 554 to 563 (TTDTATILSN) are compositionally biased toward polar residues. Over residues 564–582 (QHEKDSGVGRTDESTRNDE) the composition is skewed to basic and acidic residues. The stretch at 680–705 (ESVDKELELLNEELRSIELECLSIVR) forms a coiled coil. A compositionally biased stretch (basic and acidic residues) spans 746 to 755 (ELPEKSDKDS). 2 disordered regions span residues 746 to 798 (ELPE…IEAY) and 834 to 853 (IKER…PKLG). Residues 756-770 (SSAYNTGESCRSTPL) show a composition bias toward polar residues.

As to quaternary structure, interacts with NLGN1 and EFNB2. Interacts with UBE2D2 and with MUSK via the first PDZ domain. In myotubes, the interaction between PDZRN3 and MUSK is enhanced upon agrin stimulation. Auto-ubiquitinated. In terms of tissue distribution, highly expressed in skeletal and cardiac muscle and at lower levels in spinal cord and brain (at protein level). Also expressed in kidney and lung. In muscles, concentrated at the neuromuscular junction (NMJ).

The protein localises to the synapse. The protein resides in the cytoplasm. The catalysed reaction is S-ubiquitinyl-[E2 ubiquitin-conjugating enzyme]-L-cysteine + [acceptor protein]-L-lysine = [E2 ubiquitin-conjugating enzyme]-L-cysteine + N(6)-ubiquitinyl-[acceptor protein]-L-lysine.. Its pathway is protein modification; protein ubiquitination. In terms of biological role, E3 ubiquitin-protein ligase. Plays an important role in regulating the surface level of MUSK on myotubes. Mediates the ubiquitination of MUSK, promoting its endocytosis and lysosomal degradation. Might contribute to terminal myogenic differentiation. The chain is E3 ubiquitin-protein ligase PDZRN3 (Pdzrn3) from Mus musculus (Mouse).